Consider the following 173-residue polypeptide: Bifunctional protein PyrR (173 aa).

A PRPP-binding motif is present at residues 93 to 105; sequence VILVDDVLYTGRT.

The protein belongs to the purine/pyrimidine phosphoribosyltransferase family. PyrR subfamily. As to quaternary structure, homodimer and homohexamer; in equilibrium.

It carries out the reaction UMP + diphosphate = 5-phospho-alpha-D-ribose 1-diphosphate + uracil. Its function is as follows. Regulates transcriptional attenuation of the pyrimidine nucleotide (pyr) operon by binding in a uridine-dependent manner to specific sites on pyr mRNA. This disrupts an antiterminator hairpin in the RNA and favors formation of a downstream transcription terminator, leading to a reduced expression of downstream genes. Functionally, also displays a weak uracil phosphoribosyltransferase activity which is not physiologically significant. The sequence is that of Bifunctional protein PyrR from Streptococcus uberis (strain ATCC BAA-854 / 0140J).